Consider the following 134-residue polypeptide: Phosphoribosyl-AMP cyclohydrolase (134 aa).

A Mg(2+)-binding site is contributed by Asp-80. Cys-81 provides a ligand contact to Zn(2+). Asp-82 and Asp-84 together coordinate Mg(2+). Cys-98 and Cys-105 together coordinate Zn(2+).

Belongs to the PRA-CH family. Homodimer. Mg(2+) serves as cofactor. Zn(2+) is required as a cofactor.

It is found in the cytoplasm. The catalysed reaction is 1-(5-phospho-beta-D-ribosyl)-5'-AMP + H2O = 1-(5-phospho-beta-D-ribosyl)-5-[(5-phospho-beta-D-ribosylamino)methylideneamino]imidazole-4-carboxamide. It functions in the pathway amino-acid biosynthesis; L-histidine biosynthesis; L-histidine from 5-phospho-alpha-D-ribose 1-diphosphate: step 3/9. In terms of biological role, catalyzes the hydrolysis of the adenine ring of phosphoribosyl-AMP. This is Phosphoribosyl-AMP cyclohydrolase from Bordetella petrii (strain ATCC BAA-461 / DSM 12804 / CCUG 43448).